Here is a 289-residue protein sequence, read N- to C-terminus: Urease accessory protein UreD (289 aa).

It belongs to the UreD family. In terms of assembly, ureD, UreF and UreG form a complex that acts as a GTP-hydrolysis-dependent molecular chaperone, activating the urease apoprotein by helping to assemble the nickel containing metallocenter of UreC. The UreE protein probably delivers the nickel.

The protein localises to the cytoplasm. Required for maturation of urease via the functional incorporation of the urease nickel metallocenter. The polypeptide is Urease accessory protein UreD (Xanthobacter autotrophicus (strain ATCC BAA-1158 / Py2)).